We begin with the raw amino-acid sequence, 277 residues long: Large ribosomal subunit protein uL2 (277 aa).

2 disordered regions span residues 32 to 58 (KSLTKGKVSRAGRDSSGRISVRRRGGG) and 225 to 277 (VAMN…RRNN).

The protein belongs to the universal ribosomal protein uL2 family. Part of the 50S ribosomal subunit. Forms a bridge to the 30S subunit in the 70S ribosome.

Its function is as follows. One of the primary rRNA binding proteins. Required for association of the 30S and 50S subunits to form the 70S ribosome, for tRNA binding and peptide bond formation. It has been suggested to have peptidyltransferase activity; this is somewhat controversial. Makes several contacts with the 16S rRNA in the 70S ribosome. The sequence is that of Large ribosomal subunit protein uL2 from Borrelia duttonii (strain Ly).